We begin with the raw amino-acid sequence, 315 residues long: Protoheme IX farnesyltransferase 1 (315 aa).

Helical transmembrane passes span 25–45, 49–69, 87–107, 120–139, 145–165, 176–196, 220–240, 242–262, and 280–300; these read PGIIFGNLISVAGGFLLAAKG, LALMLASLVGLSLVVASGCAV, RVTVTGEIAVGNVLAFGLALG, ALALLFAVIGYIVYVGVYSL, SVYGTLVGSFSGAVPPVVGYC, AILLLMFSLWQMPHSYAIAIF, LHIVLYIAVFALVSALLPLAG, TGIAFMAVTCATSLWWLAMAL, and GFSIITIMALSITMALDSQVI.

The protein belongs to the UbiA prenyltransferase family. Protoheme IX farnesyltransferase subfamily.

Its subcellular location is the cell inner membrane. It catalyses the reaction heme b + (2E,6E)-farnesyl diphosphate + H2O = Fe(II)-heme o + diphosphate. It functions in the pathway porphyrin-containing compound metabolism; heme O biosynthesis; heme O from protoheme: step 1/1. Functionally, converts heme B (protoheme IX) to heme O by substitution of the vinyl group on carbon 2 of heme B porphyrin ring with a hydroxyethyl farnesyl side group. The chain is Protoheme IX farnesyltransferase 1 from Shewanella sp. (strain W3-18-1).